Reading from the N-terminus, the 652-residue chain is DNA ligase (652 aa).

NAD(+) contacts are provided by residues 29–33, 78–79, and Glu107; these read DSEYD and SL. The active-site N6-AMP-lysine intermediate is the Lys109. NAD(+) contacts are provided by Arg130, Glu164, Lys278, and Lys302. Cys395, Cys398, Cys413, and Cys418 together coordinate Zn(2+). A BRCT domain is found at 577–652; that stretch reads VADAALSGLT…VRDEAWLESL (76 aa).

The protein belongs to the NAD-dependent DNA ligase family. LigA subfamily. The cofactor is Mg(2+). Mn(2+) serves as cofactor.

The enzyme catalyses NAD(+) + (deoxyribonucleotide)n-3'-hydroxyl + 5'-phospho-(deoxyribonucleotide)m = (deoxyribonucleotide)n+m + AMP + beta-nicotinamide D-nucleotide.. In terms of biological role, DNA ligase that catalyzes the formation of phosphodiester linkages between 5'-phosphoryl and 3'-hydroxyl groups in double-stranded DNA using NAD as a coenzyme and as the energy source for the reaction. It is essential for DNA replication and repair of damaged DNA. This is DNA ligase from Streptococcus pneumoniae (strain CGSP14).